The chain runs to 73 residues: Disintegrin trigramin-beta-2 (73 aa).

A Disintegrin domain is found at 1–73; it reads EAGKDCDCGS…AGCPRNPFHA (73 aa). 6 cysteine pairs are disulfide-bonded: C6-C21, C8-C16, C15-C38, C29-C35, C34-C59, and C47-C66. The Cell attachment site motif lies at 51-53; the sequence is RGD.

The protein belongs to the venom metalloproteinase (M12B) family. P-II subfamily. P-IIa sub-subfamily. Monomer (disintegrin). In terms of tissue distribution, expressed by the venom gland.

The protein localises to the secreted. Its function is as follows. Inhibits fibrinogen interaction with platelets. Acts by binding to the alpha-IIb/beta-3 receptor (ITGA2B/ITGB3) on the platelet surface and inhibits aggregation induced by ADP, thrombin, platelet-activating factor and collagen. The protein is Disintegrin trigramin-beta-2 of Craspedocephalus gramineus (Bamboo pit viper).